Consider the following 314-residue polypeptide: Methenyltetrahydromethanopterin cyclohydrolase (314 aa).

This sequence belongs to the MCH family.

Its subcellular location is the cytoplasm. It catalyses the reaction 5,10-methenyl-5,6,7,8-tetrahydromethanopterin + H2O = N(5)-formyl-5,6,7,8-tetrahydromethanopterin + H(+). The protein operates within one-carbon metabolism; methanogenesis from CO(2); 5,10-methenyl-5,6,7,8-tetrahydromethanopterin from CO(2): step 3/3. In terms of biological role, catalyzes the reversible interconversion of 5-formyl-H(4)MPT to methenyl-H(4)MPT(+). This is Methenyltetrahydromethanopterin cyclohydrolase from Methanoregula boonei (strain DSM 21154 / JCM 14090 / 6A8).